The chain runs to 177 residues: MSRVGKKPVPVPSGVTATVTGQTVKVKGSKGELQFVVPSQVVVEFKDGAVSVQPKDQSKQARSLWGTSRAQVANLVEGVSKGFEKKLEITGVGYRAAMAGKALKLSLGYSHDIEYEIPAGITIVTPKPTEIVVSGIDRQRVGQVAAEIREYRGPEPYKGKGVKYAGEFIFRKEGKKK.

This sequence belongs to the universal ribosomal protein uL6 family. As to quaternary structure, part of the 50S ribosomal subunit.

This protein binds to the 23S rRNA, and is important in its secondary structure. It is located near the subunit interface in the base of the L7/L12 stalk, and near the tRNA binding site of the peptidyltransferase center. This chain is Large ribosomal subunit protein uL6, found in Methylorubrum extorquens (strain CM4 / NCIMB 13688) (Methylobacterium extorquens).